A 680-amino-acid chain; its full sequence is MIDRYKHQQLRIGLVSPQQISAWATKKIPNGEIVGEVTKPYTFHYKTNKPEKDGLFCERIFGPIKSGICACGNYRVIGDEKEDPKFCEQCGVEFVDSRIRRYQMGYIKLTCPVTHVWYLKRLPSYIANLLDKPLKELEGLVYCDFSFARPITKKPTFLRLRGSFEYEIQSWKYSIPLFFTTQGFDIFRNREISTGAGAIREQLADLDLRIIIENSLVEWKQLGEEGPTGNEWEDRKIVRRKDFLVRRMELAKHFIRTNIEPEWMVLCLLPVLPPELRPIIQIEGGKLMSSDINELYRRVIYRNNTLTDLLTTSRSTPGELVMCQEKLVQEAVDTLLDNGIRGQPMRDGHNKVYKSFSDVIEGKEGRFRETLLGKRVDYSGRSVIVVGPSLSLHRCGLPREIAIELFQTFVIRGLIRQHLASNIGVAKSQIREKKPIVWEILQEVMQGHPVLLNRAPTLHRLGIQSFQPILVEGRTICLHPLVCKGFNADFDGDQMAVHVPLSLEAQAEARLLMFSHMNLLSPAIGDPISVPTQDMLIGLYVLTSGTRRGICANRYNPCNRKNDKNEKLYETNYKYMKEPFFCNSYDAIGAYRQKRINLDSPLWLRWQLDQRVIASREVPIEVHYESFGNYHEIYAHYLIVRSVKKETFCIYIRTTAGHISFYREIEEAIQGFSQACSYDT.

Zn(2+) is bound by residues Cys69, Cys71, Cys87, and Cys90. Positions 489, 491, and 493 each coordinate Mg(2+).

The protein belongs to the RNA polymerase beta' chain family. RpoC1 subfamily. In plastids the minimal PEP RNA polymerase catalytic core is composed of four subunits: alpha, beta, beta', and beta''. When a (nuclear-encoded) sigma factor is associated with the core the holoenzyme is formed, which can initiate transcription. Mg(2+) serves as cofactor. Requires Zn(2+) as cofactor.

Its subcellular location is the plastid. It localises to the chloroplast. The enzyme catalyses RNA(n) + a ribonucleoside 5'-triphosphate = RNA(n+1) + diphosphate. Functionally, DNA-dependent RNA polymerase catalyzes the transcription of DNA into RNA using the four ribonucleoside triphosphates as substrates. This chain is DNA-directed RNA polymerase subunit beta', found in Draba nemorosa (Woodland whitlowgrass).